The following is a 117-amino-acid chain: Large ribosomal subunit protein bL20 (117 aa).

It belongs to the bacterial ribosomal protein bL20 family.

In terms of biological role, binds directly to 23S ribosomal RNA and is necessary for the in vitro assembly process of the 50S ribosomal subunit. It is not involved in the protein synthesizing functions of that subunit. This is Large ribosomal subunit protein bL20 from Roseiflexus castenholzii (strain DSM 13941 / HLO8).